The following is a 392-amino-acid chain: Putative pectate lyase 21 (392 aa).

The first 21 residues, 1–21 (MSIVCTFFLFLLNTSFAFAFA), serve as a signal peptide directing secretion. N-linked (GlcNAc...) asparagine glycosylation is present at asparagine 38. Residues aspartate 189, aspartate 213, and aspartate 217 each contribute to the Ca(2+) site. An N-linked (GlcNAc...) asparagine glycan is attached at asparagine 220. Arginine 269 is a catalytic residue.

Belongs to the polysaccharide lyase 1 family. It depends on Ca(2+) as a cofactor.

It carries out the reaction Eliminative cleavage of (1-&gt;4)-alpha-D-galacturonan to give oligosaccharides with 4-deoxy-alpha-D-galact-4-enuronosyl groups at their non-reducing ends.. It participates in glycan metabolism; pectin degradation; 2-dehydro-3-deoxy-D-gluconate from pectin: step 2/5. This Arabidopsis thaliana (Mouse-ear cress) protein is Putative pectate lyase 21.